A 235-amino-acid chain; its full sequence is MRKIAIIGAMAEEVERLASHLENRQTRQHAGSTFHSGHLHGVEVVILQSGIGKVNAAVGTTQLLEAYQPDAVINTGSAGGFGVDLDVGDVVISSEVRHHDVDAVVFGYEYGQVPQMPAAYAPDPHLVNVARECIEGLGELRVAEGLICTGDIFMADKAAVDQARERFPSMLAAEMEAAAIAQTCHLYGCPFVVIRALSDIAGKESDLSFQAFIEKAATHSAMMVEAMVKRLGTAS.

Catalysis depends on Glu-13, which acts as the Proton acceptor. Residues Gly-79, Met-154, and 175–176 (ME) each bind substrate. Asp-199 functions as the Proton donor in the catalytic mechanism.

The protein belongs to the PNP/UDP phosphorylase family. MtnN subfamily.

It catalyses the reaction S-adenosyl-L-homocysteine + H2O = S-(5-deoxy-D-ribos-5-yl)-L-homocysteine + adenine. It carries out the reaction S-methyl-5'-thioadenosine + H2O = 5-(methylsulfanyl)-D-ribose + adenine. The catalysed reaction is 5'-deoxyadenosine + H2O = 5-deoxy-D-ribose + adenine. It functions in the pathway amino-acid biosynthesis; L-methionine biosynthesis via salvage pathway; S-methyl-5-thio-alpha-D-ribose 1-phosphate from S-methyl-5'-thioadenosine (hydrolase route): step 1/2. Catalyzes the irreversible cleavage of the glycosidic bond in both 5'-methylthioadenosine (MTA) and S-adenosylhomocysteine (SAH/AdoHcy) to adenine and the corresponding thioribose, 5'-methylthioribose and S-ribosylhomocysteine, respectively. Also cleaves 5'-deoxyadenosine, a toxic by-product of radical S-adenosylmethionine (SAM) enzymes, into 5-deoxyribose and adenine. The polypeptide is 5'-methylthioadenosine/S-adenosylhomocysteine nucleosidase (Chromohalobacter salexigens (strain ATCC BAA-138 / DSM 3043 / CIP 106854 / NCIMB 13768 / 1H11)).